The chain runs to 122 residues: Flagellar protein FliT (122 aa).

The interval 1-50 is required for homodimerization; that stretch reads MTSTVEFINRWQRIALLSQSLLELAQRGEWDLLLQQEVSYLQSIETVMEK. The fliD binding stretch occupies residues 60-98; that stretch reads IQDMVAGYIKQTLDNEQLLKGLLQQRLDELSSLIGQSTR.

It belongs to the FliT family. As to quaternary structure, homodimer. Interacts with FliD and FlhC.

It localises to the cytoplasm. The protein localises to the cytosol. Functionally, dual-function protein that regulates the transcription of class 2 flagellar operons and that also acts as an export chaperone for the filament-capping protein FliD. As a transcriptional regulator, acts as an anti-FlhDC factor; it directly binds FlhC, thus inhibiting the binding of the FlhC/FlhD complex to class 2 promoters, resulting in decreased expression of class 2 flagellar operons. As a chaperone, effects FliD transition to the membrane by preventing its premature polymerization, and by directing it to the export apparatus. This Salmonella gallinarum (strain 287/91 / NCTC 13346) protein is Flagellar protein FliT.